Consider the following 340-residue polypeptide: DnaJ homolog subfamily C member 22 (340 aa).

Residues 1-50 (MGKSLLAAYGLWALGGPLGLYHIYLGRDSHALLWMLTLGGFGMGWMWDFW) enclose the TM2 domain. Transmembrane regions (helical) follow at residues 5–25 (LLAA…HIYL), 30–50 (HALL…WDFW), 81–101 (FIGQ…GLSF), 105–125 (FHMV…ATVG), 135–155 (LIAA…MIPI), 186–206 (IGLV…LNTS), and 212–232 (VAGS…ISAL). The region spanning 278–340 (MACKVLGVNF…LMRLRKSKTL (63 aa)) is the J domain.

The protein localises to the membrane. Functionally, may function as a co-chaperone. The sequence is that of DnaJ homolog subfamily C member 22 (dnajc22) from Xenopus tropicalis (Western clawed frog).